Here is an 89-residue protein sequence, read N- to C-terminus: Small ribosomal subunit protein uS15 (89 aa).

It belongs to the universal ribosomal protein uS15 family. As to quaternary structure, part of the 30S ribosomal subunit. Forms a bridge to the 50S subunit in the 70S ribosome, contacting the 23S rRNA.

Its function is as follows. One of the primary rRNA binding proteins, it binds directly to 16S rRNA where it helps nucleate assembly of the platform of the 30S subunit by binding and bridging several RNA helices of the 16S rRNA. Functionally, forms an intersubunit bridge (bridge B4) with the 23S rRNA of the 50S subunit in the ribosome. The polypeptide is Small ribosomal subunit protein uS15 (Polynucleobacter asymbioticus (strain DSM 18221 / CIP 109841 / QLW-P1DMWA-1) (Polynucleobacter necessarius subsp. asymbioticus)).